Here is a 186-residue protein sequence, read N- to C-terminus: Translation initiation factor IF-3 (186 aa).

It belongs to the IF-3 family. As to quaternary structure, monomer.

It localises to the cytoplasm. Functionally, IF-3 binds to the 30S ribosomal subunit and shifts the equilibrium between 70S ribosomes and their 50S and 30S subunits in favor of the free subunits, thus enhancing the availability of 30S subunits on which protein synthesis initiation begins. In Chlamydia caviae (strain ATCC VR-813 / DSM 19441 / 03DC25 / GPIC) (Chlamydophila caviae), this protein is Translation initiation factor IF-3.